The primary structure comprises 151 residues: Cathelicidin-3 (151 aa).

The N-terminal stretch at 1 to 17 is a signal peptide; sequence MLSCWVLLLALLGGACA. A propeptide spanning residues 18-122 is cleaved from the precursor; sequence LPAPLGYSQA…TCVDSMADPV (105 aa). Intrachain disulfides connect Cys75–Cys86 and Cys97–Cys114. A helical transmembrane segment spans residues 128–148; that stretch reads WPLVPVAINTVAAGINLYKAI.

This sequence belongs to the cathelicidin family. As to expression, detected in bone marrow, liver and lung.

It localises to the secreted. Its subcellular location is the membrane. Functionally, may bind bacterial lipopolysaccharide (LPS). May have antimicrobial activity and play a role in the innate immune response. The chain is Cathelicidin-3 (CATHL3) from Gallus gallus (Chicken).